Here is a 217-residue protein sequence, read N- to C-terminus: Peroxiredoxin (217 aa).

The region spanning 2-159 (AVIGEKFPDV…VVRLVKALQT (158 aa)) is the Thioredoxin domain. Cys-46 (cysteine sulfenic acid (-SOH) intermediate) is an active-site residue. Arg-122 is a substrate binding site.

It belongs to the peroxiredoxin family. Prx6 subfamily. Homodecamer. Pentamer of dimers that assemble into a ring structure.

The protein localises to the cytoplasm. The enzyme catalyses a hydroperoxide + [thioredoxin]-dithiol = an alcohol + [thioredoxin]-disulfide + H2O. Functionally, thiol-specific peroxidase that catalyzes the reduction of hydrogen peroxide and organic hydroperoxides to water and alcohols, respectively. Plays a role in cell protection against oxidative stress by detoxifying peroxides. In Methanococcus vannielii (strain ATCC 35089 / DSM 1224 / JCM 13029 / OCM 148 / SB), this protein is Peroxiredoxin.